The sequence spans 474 residues: ATP synthase subunit beta 2 (474 aa).

Position 157-164 (157-164) interacts with ATP; sequence GGAGVGKT.

Belongs to the ATPase alpha/beta chains family. In terms of assembly, F-type ATPases have 2 components, CF(1) - the catalytic core - and CF(0) - the membrane proton channel. CF(1) has five subunits: alpha(3), beta(3), gamma(1), delta(1), epsilon(1). CF(0) has three main subunits: a(1), b(2) and c(9-12). The alpha and beta chains form an alternating ring which encloses part of the gamma chain. CF(1) is attached to CF(0) by a central stalk formed by the gamma and epsilon chains, while a peripheral stalk is formed by the delta and b chains.

It localises to the cell inner membrane. The catalysed reaction is ATP + H2O + 4 H(+)(in) = ADP + phosphate + 5 H(+)(out). Produces ATP from ADP in the presence of a proton gradient across the membrane. The catalytic sites are hosted primarily by the beta subunits. The polypeptide is ATP synthase subunit beta 2 (Polaromonas naphthalenivorans (strain CJ2)).